Here is a 545-residue protein sequence, read N- to C-terminus: CTP synthase (545 aa).

Residues 1-266 form an amidoligase domain region; the sequence is MTKNYIFITG…DDYICNYFKL (266 aa). Residue Ser14 participates in CTP binding. Ser14 provides a ligand contact to UTP. ATP-binding positions include 15–20 and Asp72; that span reads SLGKGI. 2 residues coordinate Mg(2+): Asp72 and Glu140. CTP contacts are provided by residues 147–149, 187–192, and Lys223; these read DIE and KTKPTQ. UTP-binding positions include 187–192 and Lys223; that span reads KTKPTQ. 239 to 241 is an ATP binding site; it reads KDV. A Glutamine amidotransferase type-1 domain is found at 291 to 543; it reads VIGIIGKYIK…IKSAGKHKKN (253 aa). Gly352 provides a ligand contact to L-glutamine. Cys379 functions as the Nucleophile; for glutamine hydrolysis in the catalytic mechanism. L-glutamine is bound by residues 380-383, Glu403, and Arg471; that span reads LGMQ. Catalysis depends on residues His516 and Glu518.

This sequence belongs to the CTP synthase family. In terms of assembly, homotetramer.

The enzyme catalyses UTP + L-glutamine + ATP + H2O = CTP + L-glutamate + ADP + phosphate + 2 H(+). It catalyses the reaction L-glutamine + H2O = L-glutamate + NH4(+). The catalysed reaction is UTP + NH4(+) + ATP = CTP + ADP + phosphate + 2 H(+). The protein operates within pyrimidine metabolism; CTP biosynthesis via de novo pathway; CTP from UDP: step 2/2. Its activity is regulated as follows. Allosterically activated by GTP, when glutamine is the substrate; GTP has no effect on the reaction when ammonia is the substrate. The allosteric effector GTP functions by stabilizing the protein conformation that binds the tetrahedral intermediate(s) formed during glutamine hydrolysis. Inhibited by the product CTP, via allosteric rather than competitive inhibition. Its function is as follows. Catalyzes the ATP-dependent amination of UTP to CTP with either L-glutamine or ammonia as the source of nitrogen. Regulates intracellular CTP levels through interactions with the four ribonucleotide triphosphates. The chain is CTP synthase from Buchnera aphidicola subsp. Acyrthosiphon pisum (strain Tuc7).